The sequence spans 410 residues: Cell division protein FtsZ (410 aa).

GTP contacts are provided by residues 22–26, 109–111, Glu140, Arg144, and Asp188; these read GGGGN and GTG. The disordered stretch occupies residues 318-410; the sequence is ESKKDRKPHR…STPPFFRRKR (93 aa). The span at 330 to 344 shows a compositional bias: polar residues; that stretch reads RQAVQPMQQTTQSVE. The segment covering 360–398 has biased composition (basic and acidic residues); sequence WDIRREQNTRPKVDESSLEQVDKKEFDTFHREEPNHNDD.

It belongs to the FtsZ family. As to quaternary structure, homodimer. Polymerizes to form a dynamic ring structure in a strictly GTP-dependent manner. Interacts directly with several other division proteins.

It localises to the cytoplasm. Functionally, essential cell division protein that forms a contractile ring structure (Z ring) at the future cell division site. The regulation of the ring assembly controls the timing and the location of cell division. One of the functions of the FtsZ ring is to recruit other cell division proteins to the septum to produce a new cell wall between the dividing cells. Binds GTP and shows GTPase activity. The protein is Cell division protein FtsZ of Enterococcus faecalis (strain ATCC 700802 / V583).